We begin with the raw amino-acid sequence, 39 residues long: MTSQARIPLWIVAVVVGLGVVTVVGLFFYGSYTGLGAPV.

The chain crosses the membrane as a helical span at residues 7–27 (IPLWIVAVVVGLGVVTVVGLF).

It belongs to the PsbJ family. PSII is composed of 1 copy each of membrane proteins PsbA, PsbB, PsbC, PsbD, PsbE, PsbF, PsbH, PsbI, PsbJ, PsbK, PsbL, PsbM, PsbT, PsbX, PsbY, PsbZ, Psb30/Ycf12, peripheral proteins PsbO, CyanoQ (PsbQ), PsbU, PsbV and a large number of cofactors. It forms dimeric complexes.

It localises to the cellular thylakoid membrane. One of the components of the core complex of photosystem II (PSII). PSII is a light-driven water:plastoquinone oxidoreductase that uses light energy to abstract electrons from H(2)O, generating O(2) and a proton gradient subsequently used for ATP formation. It consists of a core antenna complex that captures photons, and an electron transfer chain that converts photonic excitation into a charge separation. The polypeptide is Photosystem II reaction center protein J (Synechococcus sp. (strain JA-3-3Ab) (Cyanobacteria bacterium Yellowstone A-Prime)).